The following is a 403-amino-acid chain: Peroxisomal membrane protein PEX13 (403 aa).

Pro residues predominate over residues Met-1–Pro-11. The segment at Met-1–Asn-69 is disordered. Residues Met-1 to Glu-134 are Peroxisomal matrix-facing. Polar residues predominate over residues Pro-59–Asn-69. A helical membrane pass occupies residues Ser-135–Tyr-155. The segment at Met-145 to Ser-233 is targeting to peroxisomes. The Cytoplasmic segment spans residues Asn-156 to His-174. The helical transmembrane segment at Phe-175 to Tyr-192 threads the bilayer. An interaction with PEX19 region spans residues Phe-175–Gln-196. The Peroxisomal matrix segment spans residues Arg-193–Ser-233. A helical transmembrane segment spans residues Trp-234–Leu-254. Residues Ser-255–Leu-403 lie on the Cytoplasmic side of the membrane. An SH3 domain is found at Asp-272 to Lys-336. Disordered regions lie at residues Lys-341–Val-364 and Phe-381–Leu-403. The segment covering Glu-344–Val-364 has biased composition (polar residues).

This sequence belongs to the peroxin-13 family. In terms of assembly, interacts (via SH3 domain) with PEX14 (via SH3-binding motif); forming the PEX13-PEX14 docking complex. Interacts with PEX19.

It is found in the peroxisome membrane. Component of the PEX13-PEX14 docking complex, a translocon channel that specifically mediates the import of peroxisomal cargo proteins bound to PEX5 receptor. The PEX13-PEX14 docking complex forms a large import pore which can be opened to a diameter of about 9 nm. Mechanistically, PEX5 receptor along with cargo proteins associates with the PEX14 subunit of the PEX13-PEX14 docking complex in the cytosol, leading to the insertion of the receptor into the organelle membrane with the concomitant translocation of the cargo into the peroxisome matrix. Involved in the import of PTS1- and PTS2-type containing proteins. This chain is Peroxisomal membrane protein PEX13, found in Rattus norvegicus (Rat).